A 483-amino-acid polypeptide reads, in one-letter code: Serine hydroxymethyltransferase, cytosolic (483 aa).

N6-(pyridoxal phosphate)lysine is present on Lys257.

Belongs to the SHMT family. In terms of assembly, homotetramer. Identified in complex with ABRAXAS2 and the other subunits of the BRISC complex, at least composed of ABRAXAS2, BRCC3/BRCC36, BABAM2 and BABAM1/NBA1. It depends on pyridoxal 5'-phosphate as a cofactor.

The protein localises to the cytoplasm. The catalysed reaction is (6R)-5,10-methylene-5,6,7,8-tetrahydrofolate + glycine + H2O = (6S)-5,6,7,8-tetrahydrofolate + L-serine. The protein operates within one-carbon metabolism; tetrahydrofolate interconversion. Interconversion of serine and glycine. The chain is Serine hydroxymethyltransferase, cytosolic (SHMT1) from Pongo abelii (Sumatran orangutan).